Consider the following 230-residue polypeptide: Orotidine 5'-phosphate decarboxylase (230 aa).

Substrate is bound by residues aspartate 8, lysine 30, 59 to 68, threonine 118, arginine 178, glutamine 187, glycine 207, and arginine 208; that span reads DLKLYDIPNT. The Proton donor role is filled by lysine 61.

The protein belongs to the OMP decarboxylase family. Type 1 subfamily. As to quaternary structure, homodimer.

It carries out the reaction orotidine 5'-phosphate + H(+) = UMP + CO2. The protein operates within pyrimidine metabolism; UMP biosynthesis via de novo pathway; UMP from orotate: step 2/2. Catalyzes the decarboxylation of orotidine 5'-monophosphate (OMP) to uridine 5'-monophosphate (UMP). The chain is Orotidine 5'-phosphate decarboxylase from Sulfurovum sp. (strain NBC37-1).